The following is a 117-amino-acid chain: Small ribosomal subunit protein eS25 (117 aa).

The interval 1–38 is disordered; the sequence is MPPKKDAKSSAKQPQKTQKKKEGSGGGKAKKKKWSKGK. A compositionally biased stretch (basic residues) spans 28–37; it reads KAKKKKWSKG.

This sequence belongs to the eukaryotic ribosomal protein eS25 family.

In Drosophila melanogaster (Fruit fly), this protein is Small ribosomal subunit protein eS25 (RpS25).